The sequence spans 358 residues: MTATLTLETMTSEEEYGPRNCVVCGDRATGYHFHALTCEGCKGFFRRTVSKTIGPICPFAGRCEVSKAQRRHCPACRLQKCLNVGMRKDMILSAEALALRRARQARRRAQKASLQLSQQQKELIQTLLGAHTRHVGPMFDQFVQFRPPAYLFSHHRPFQPLAPVLPLLTHFADINTFMVQQIIKFTKDLPLFRSLTMEDQISLLKGAAVEILHISLNTTFCLQTQNFFCGPLCYKMEDAVHVGFQYEFLELIIHFHKTLKRLQLQEPEYALMAAMALFSPDRPGVTQREEIDQLQEEVALILNNHIMEQQSRLQSRFLYAKLMGLLAELRSINSAYSYEIHRIQGLSAMMPLLGEICS.

A DNA-binding region (nuclear receptor) is located at residues 18 to 93 (PRNCVVCGDR…VGMRKDMILS (76 aa)). The NR C4-type zinc-finger motif lies at 21–41 (CVVCGDRATGYHFHALTCEGC). Thr48 is modified (phosphothreonine; by PKC). Residues 57–81 (CPFAGRCEVSKAQRRHCPACRLQKC) form an NR C4-type zinc finger. In terms of domain architecture, NR LBD spans 119–358 (QQKELIQTLL…MMPLLGEICS (240 aa)).

This sequence belongs to the nuclear hormone receptor family. NR1 subfamily. In terms of assembly, heterodimer of NR1I3 and RXR. Interacts with PSMC4. Interacts with ECT2. Directly interacts with DNAJC7; this complex may also include HSP90. Interacts with CRY1. Interacts with CRY2 in a ligand-dependent manner. In terms of processing, phosphorylated at Thr-48 by PKC, dephosphorylation of Thr-48 is required for nuclear translocation and activation.

The protein resides in the nucleus. It localises to the cytoplasm. It is found in the cytoskeleton. In terms of biological role, binds and transactivates the retinoic acid response elements that control expression of the retinoic acid receptor beta 2 and alcohol dehydrogenase 3 genes. Transactivates both the phenobarbital responsive element module of the human CYP2B6 gene and the CYP3A4 xenobiotic response element. The protein is Nuclear receptor subfamily 1 group I member 3 (Nr1i3) of Rattus norvegicus (Rat).